The primary structure comprises 351 residues: MAAPNSLFVRACKRQPVERTPVWFMRQAGRYMSEYRAVREKYSLVEICKKPDVAAEVTITAAEALNVDAAIIFADLLLPLEVMGLPFHFSPGEGPVIEVPIRDAAHITRLRTDRAHDLGYVAEAVKKVSDHFGSKLPVIGFCGAPFTLASYMIEGGGSRNYLEVKKLMYNSPHAWDELLGKLVAVLSEYTADQVKAGADVIQIFDSWVGCLSVEDYRRYVLPRTTELVKALQHSTRVPIIYFGTDSATLLPSMRETGAEVIGLDWRVPLDQGWSLLEHSVAIQGNLDPVLLFAEWPELKSRAERILKQADGRPGHIFNLGHGILPHTPVQNVKDLAKFVHEYSSQLVGPRE.

Residues 26-30 (RQAGR), Asp-75, Tyr-151, Ser-206, and His-321 each bind substrate.

This sequence belongs to the uroporphyrinogen decarboxylase family. In terms of assembly, homodimer.

It is found in the cytoplasm. The catalysed reaction is uroporphyrinogen III + 4 H(+) = coproporphyrinogen III + 4 CO2. It participates in porphyrin-containing compound metabolism; protoporphyrin-IX biosynthesis; coproporphyrinogen-III from 5-aminolevulinate: step 4/4. Its function is as follows. Catalyzes the decarboxylation of four acetate groups of uroporphyrinogen-III to yield coproporphyrinogen-III. The chain is Uroporphyrinogen decarboxylase from Koribacter versatilis (strain Ellin345).